Reading from the N-terminus, the 512-residue chain is Probable cytosol aminopeptidase (512 aa).

Mn(2+)-binding residues include K281 and D286. K293 is an active-site residue. Mn(2+)-binding residues include D304, D363, and E365. The active site involves R367.

Belongs to the peptidase M17 family. Mn(2+) serves as cofactor.

The protein resides in the cytoplasm. The enzyme catalyses Release of an N-terminal amino acid, Xaa-|-Yaa-, in which Xaa is preferably Leu, but may be other amino acids including Pro although not Arg or Lys, and Yaa may be Pro. Amino acid amides and methyl esters are also readily hydrolyzed, but rates on arylamides are exceedingly low.. It catalyses the reaction Release of an N-terminal amino acid, preferentially leucine, but not glutamic or aspartic acids.. Presumably involved in the processing and regular turnover of intracellular proteins. Catalyzes the removal of unsubstituted N-terminal amino acids from various peptides. This Koribacter versatilis (strain Ellin345) protein is Probable cytosol aminopeptidase.